Consider the following 195-residue polypeptide: 2-hydroxychromene-2-carboxylate isomerase (195 aa).

Serine 13 functions as the Nucleophile in the catalytic mechanism. Serine 13 lines the glutathione pocket. Residues lysine 45 and 55-56 (NR) each bind substrate. 181–184 (WGND) serves as a coordination point for glutathione.

The protein belongs to the GST superfamily. NadH family. The cofactor is glutathione.

The catalysed reaction is 2-hydroxychromene-2-carboxylate = (3E)-4-(2-hydroxyphenyl)-2-oxobut-3-enoate. Activated by salicylate. Its function is as follows. Involved in the naphthalene and naphthalenesulfonate catabolic pathway. Catalyzes the reversible glutathione-dependent isomerization of 2-hydroxychromene-2-carboxylate (HCCA) to trans-O-hydroxybenzylidenepyruvate (THBPA). It can also use 2-hydroxybenzo[g]chromene-2-carboxylate as substrate. The polypeptide is 2-hydroxychromene-2-carboxylate isomerase (nsaD) (Sphingobium xenophagum).